Consider the following 471-residue polypeptide: 3-isopropylmalate dehydratase large subunit (471 aa).

[4Fe-4S] cluster is bound by residues Cys347, Cys407, and Cys410.

It belongs to the aconitase/IPM isomerase family. LeuC type 1 subfamily. In terms of assembly, heterodimer of LeuC and LeuD. Requires [4Fe-4S] cluster as cofactor.

The enzyme catalyses (2R,3S)-3-isopropylmalate = (2S)-2-isopropylmalate. It participates in amino-acid biosynthesis; L-leucine biosynthesis; L-leucine from 3-methyl-2-oxobutanoate: step 2/4. Functionally, catalyzes the isomerization between 2-isopropylmalate and 3-isopropylmalate, via the formation of 2-isopropylmaleate. This is 3-isopropylmalate dehydratase large subunit from Prochlorococcus marinus (strain MIT 9211).